The chain runs to 237 residues: Ribonuclease PH (237 aa).

Phosphate is bound by residues R86 and 124-126 (GTR).

This sequence belongs to the RNase PH family. In terms of assembly, homohexameric ring arranged as a trimer of dimers.

It catalyses the reaction tRNA(n+1) + phosphate = tRNA(n) + a ribonucleoside 5'-diphosphate. Functionally, phosphorolytic 3'-5' exoribonuclease that plays an important role in tRNA 3'-end maturation. Removes nucleotide residues following the 3'-CCA terminus of tRNAs; can also add nucleotides to the ends of RNA molecules by using nucleoside diphosphates as substrates, but this may not be physiologically important. Probably plays a role in initiation of 16S rRNA degradation (leading to ribosome degradation) during starvation. The sequence is that of Ribonuclease PH from Shewanella denitrificans (strain OS217 / ATCC BAA-1090 / DSM 15013).